We begin with the raw amino-acid sequence, 252 residues long: NAP1-related protein 2 (252 aa).

The span at 1–15 shows a compositional bias: basic and acidic residues; that stretch reads MTAPADKGKKAKTDA. Residues 1–23 form a disordered region; the sequence is MTAPADKGKKAKTDADGGAAEEN. A coiled-coil region spans residues 26 to 67; that stretch reads IDGALVLSIEKLQEIQDELEKVNEEASDKVLEVEQKYSEIRR. The interval 222–252 is disordered; it reads YFNNEAEELGEDDDEEGSDADEGEEDEEEEN. Acidic residues predominate over residues 226-252; that stretch reads EAEELGEDDDEEGSDADEGEEDEEEEN.

This sequence belongs to the nucleosome assembly protein (NAP) family.

The protein resides in the nucleus. It localises to the cytoplasm. Its function is as follows. Acts as a histone H2A/H2B chaperone in nucleosome assembly. This is NAP1-related protein 2 from Oryza sativa subsp. indica (Rice).